The following is a 406-amino-acid chain: ATP synthase subunit a (406 aa).

Low complexity-rich tracts occupy residues 22–31 (AGEHGAPAPE) and 43–59 (DAAG…AEHG). The interval 22 to 76 (AGEHGAPAPEVATPAEGHGARDAAGAATDPHGAAAEHGAAAHEDPAQHGAAGAEA) is disordered. 6 helical membrane passes run 151–171 (KHVV…FAAV), 209–229 (FVPY…FGLV), 232–252 (AATA…TFLI), 278–298 (LWPL…TKPF), 304–324 (LFAN…LIFA), and 351–371 (VQAY…VAHH). The disordered stretch occupies residues 375–406 (DEHEEHGHGAAATGGAHGSHGSHVAGASPGHG). Low complexity predominate over residues 383–406 (GAAATGGAHGSHGSHVAGASPGHG).

The protein belongs to the ATPase A chain family. As to quaternary structure, F-type ATPases have 2 components, CF(1) - the catalytic core - and CF(0) - the membrane proton channel. CF(1) has five subunits: alpha(3), beta(3), gamma(1), delta(1), epsilon(1). CF(0) has three main subunits: a(1), b(2) and c(9-12). The alpha and beta chains form an alternating ring which encloses part of the gamma chain. CF(1) is attached to CF(0) by a central stalk formed by the gamma and epsilon chains, while a peripheral stalk is formed by the delta and b chains.

It localises to the cell inner membrane. In terms of biological role, key component of the proton channel; it plays a direct role in the translocation of protons across the membrane. In Anaeromyxobacter sp. (strain Fw109-5), this protein is ATP synthase subunit a.